The following is a 715-amino-acid chain: Ribosomal RNA large subunit methyltransferase K/L (715 aa).

In terms of domain architecture, THUMP spans 47–158; sequence LGYKISLWTR…RDNVTIFLDF (112 aa).

It belongs to the methyltransferase superfamily. RlmKL family.

Its subcellular location is the cytoplasm. It catalyses the reaction guanosine(2445) in 23S rRNA + S-adenosyl-L-methionine = N(2)-methylguanosine(2445) in 23S rRNA + S-adenosyl-L-homocysteine + H(+). The enzyme catalyses guanosine(2069) in 23S rRNA + S-adenosyl-L-methionine = N(2)-methylguanosine(2069) in 23S rRNA + S-adenosyl-L-homocysteine + H(+). Its function is as follows. Specifically methylates the guanine in position 2445 (m2G2445) and the guanine in position 2069 (m7G2069) of 23S rRNA. This Colwellia psychrerythraea (strain 34H / ATCC BAA-681) (Vibrio psychroerythus) protein is Ribosomal RNA large subunit methyltransferase K/L.